A 152-amino-acid chain; its full sequence is Superoxide dismutase [Cu-Zn] 1 (152 aa).

Residues His45, His47, and His62 each coordinate Cu cation. Cysteines 56 and 145 form a disulfide. His62, His70, His79, and Asp82 together coordinate Zn(2+). His119 provides a ligand contact to Cu cation.

Belongs to the Cu-Zn superoxide dismutase family. In terms of assembly, homodimer. Cu cation serves as cofactor. Zn(2+) is required as a cofactor.

Its subcellular location is the cytoplasm. It carries out the reaction 2 superoxide + 2 H(+) = H2O2 + O2. In terms of biological role, destroys radicals which are normally produced within the cells and which are toxic to biological systems. The sequence is that of Superoxide dismutase [Cu-Zn] 1 (SODCC.1) from Solanum lycopersicum (Tomato).